Reading from the N-terminus, the 235-residue chain is Thiamine import ATP-binding protein ThiQ (235 aa).

The ABC transporter domain maps to 2-230; the sequence is LKLIDITWLY…QASASALLGI (229 aa). Residue 32-39 participates in ATP binding; sequence GPSGAGKS.

Belongs to the ABC transporter superfamily. Thiamine importer (TC 3.A.1.19.1) family. As to quaternary structure, the complex is composed of two ATP-binding proteins (ThiQ), two transmembrane proteins (ThiP) and a solute-binding protein (ThiB).

It localises to the cell inner membrane. It carries out the reaction thiamine(out) + ATP + H2O = thiamine(in) + ADP + phosphate + H(+). In terms of biological role, part of the ABC transporter complex ThiBPQ involved in thiamine import. Responsible for energy coupling to the transport system. The protein is Thiamine import ATP-binding protein ThiQ of Salmonella choleraesuis (strain SC-B67).